A 184-amino-acid polypeptide reads, in one-letter code: Large ribosomal subunit protein uL6 (184 aa).

Belongs to the universal ribosomal protein uL6 family. As to quaternary structure, part of the 50S ribosomal subunit.

Its function is as follows. This protein binds to the 23S rRNA, and is important in its secondary structure. It is located near the subunit interface in the base of the L7/L12 stalk, and near the tRNA binding site of the peptidyltransferase center. The protein is Large ribosomal subunit protein uL6 of Mycoplasma genitalium (strain ATCC 33530 / DSM 19775 / NCTC 10195 / G37) (Mycoplasmoides genitalium).